Reading from the N-terminus, the 334-residue chain is Holliday junction branch migration complex subunit RuvB (334 aa).

The large ATPase domain (RuvB-L) stretch occupies residues A4–Y184. ATP-binding positions include R24, G65, K68, T69, T70, E131 to Y133, R174, Y184, and R221. T69 provides a ligand contact to Mg(2+). The small ATPAse domain (RuvB-S) stretch occupies residues N185–D255. A head domain (RuvB-H) region spans residues N258–E334. The DNA site is built by R294, R313, and R318.

This sequence belongs to the RuvB family. As to quaternary structure, homohexamer. Forms an RuvA(8)-RuvB(12)-Holliday junction (HJ) complex. HJ DNA is sandwiched between 2 RuvA tetramers; dsDNA enters through RuvA and exits via RuvB. An RuvB hexamer assembles on each DNA strand where it exits the tetramer. Each RuvB hexamer is contacted by two RuvA subunits (via domain III) on 2 adjacent RuvB subunits; this complex drives branch migration. In the full resolvosome a probable DNA-RuvA(4)-RuvB(12)-RuvC(2) complex forms which resolves the HJ.

It is found in the cytoplasm. It carries out the reaction ATP + H2O = ADP + phosphate + H(+). In terms of biological role, the RuvA-RuvB-RuvC complex processes Holliday junction (HJ) DNA during genetic recombination and DNA repair, while the RuvA-RuvB complex plays an important role in the rescue of blocked DNA replication forks via replication fork reversal (RFR). RuvA specifically binds to HJ cruciform DNA, conferring on it an open structure. The RuvB hexamer acts as an ATP-dependent pump, pulling dsDNA into and through the RuvAB complex. RuvB forms 2 homohexamers on either side of HJ DNA bound by 1 or 2 RuvA tetramers; 4 subunits per hexamer contact DNA at a time. Coordinated motions by a converter formed by DNA-disengaged RuvB subunits stimulates ATP hydrolysis and nucleotide exchange. Immobilization of the converter enables RuvB to convert the ATP-contained energy into a lever motion, pulling 2 nucleotides of DNA out of the RuvA tetramer per ATP hydrolyzed, thus driving DNA branch migration. The RuvB motors rotate together with the DNA substrate, which together with the progressing nucleotide cycle form the mechanistic basis for DNA recombination by continuous HJ branch migration. Branch migration allows RuvC to scan DNA until it finds its consensus sequence, where it cleaves and resolves cruciform DNA. This is Holliday junction branch migration complex subunit RuvB from Shewanella sp. (strain W3-18-1).